A 370-amino-acid chain; its full sequence is 3-isopropylmalate dehydrogenase 2 (370 aa).

77 to 90 (GPKWDAVPYEVRPE) serves as a coordination point for NAD(+). The substrate site is built by Arg97, Arg107, Arg135, and Asp226. 3 residues coordinate Mg(2+): Asp226, Asp250, and Asp254. Residue 290–302 (GSAPDIAGKGLAN) participates in NAD(+) binding.

It belongs to the isocitrate and isopropylmalate dehydrogenases family. LeuB type 1 subfamily. In terms of assembly, homodimer. Mg(2+) serves as cofactor. Requires Mn(2+) as cofactor.

It is found in the cytoplasm. It carries out the reaction (2R,3S)-3-isopropylmalate + NAD(+) = 4-methyl-2-oxopentanoate + CO2 + NADH. Its pathway is amino-acid biosynthesis; L-leucine biosynthesis; L-leucine from 3-methyl-2-oxobutanoate: step 3/4. Functionally, catalyzes the oxidation of 3-carboxy-2-hydroxy-4-methylpentanoate (3-isopropylmalate) to 3-carboxy-4-methyl-2-oxopentanoate. The product decarboxylates to 4-methyl-2 oxopentanoate. The polypeptide is 3-isopropylmalate dehydrogenase 2 (Bradyrhizobium diazoefficiens (strain JCM 10833 / BCRC 13528 / IAM 13628 / NBRC 14792 / USDA 110)).